A 507-amino-acid chain; its full sequence is Beta-Ala-His dipeptidase (507 aa).

Positions 1-26 are cleaved as a signal peptide; sequence MDPKLGRMAASLLAVLLLLLERGMFS. H132 contacts Zn(2+). The active site involves D134. D165 provides a ligand contact to Zn(2+). The active-site Proton acceptor is E199. E200 provides a ligand contact to Zn(2+). S219 carries the phosphoserine modification. D228 is a binding site for Zn(2+). N322 and N382 each carry an N-linked (GlcNAc...) asparagine glycan. A Zn(2+)-binding site is contributed by H478.

The protein belongs to the peptidase M20A family. In terms of assembly, homodimer. Requires Zn(2+) as cofactor. Found in serum and adult nervous central system. Absent in serum from patients with homocarnosinosis.

The protein resides in the secreted. The enzyme catalyses Preferential hydrolysis of the beta-Ala-|-His dipeptide (carnosine), and also anserine, Xaa-|-His dipeptides and other dipeptides including homocarnosine.. The catalysed reaction is carnosine + H2O = beta-alanine + L-histidine. It catalyses the reaction anserine + H2O = N(pros)-methyl-L-histidine + beta-alanine. It carries out the reaction L-alanyl-L-histidine + H2O = L-histidine + L-alanine. The enzyme catalyses glycyl-L-histidine + H2O = L-histidine + glycine. The catalysed reaction is L-homocarnosine + H2O = 4-aminobutanoate + L-histidine. Its activity is regulated as follows. Activated by cadmium ions. Inhibited by the metal chelator 1,10-o-phenantrolin. The inhibitory concentration 50% (IC(50)) is 5 uM. Its function is as follows. Catalyzes the peptide bond hydrolysis in Xaa-His dipeptides, displaying the highest activity toward carnosine (beta-alanyl-L-histidine) and anserine (beta-alanyl-3-methyl-histidine). The protein is Beta-Ala-His dipeptidase of Homo sapiens (Human).